We begin with the raw amino-acid sequence, 986 residues long: Translation initiation factor IF-2 (986 aa).

Basic and acidic residues predominate over residues 75-94 (KRLSRLEEQSRKTYEKEQHL). Disordered regions lie at residues 75 to 105 (KRLS…APPL), 127 to 148 (PPSK…PDAP), 185 to 258 (SEVP…VSFD), and 277 to 394 (GRHK…HEED). Low complexity-rich tracts occupy residues 185–210 (SEVP…ESPL) and 218–235 (SEPQ…LPEI). The segment covering 292-313 (DALKDEFEPKPAEESRVEEKVV) has biased composition (basic and acidic residues). The segment covering 315–338 (AKKPPVKAAADVKPKPVVADSSSS) has biased composition (low complexity). Basic residues predominate over residues 339–348 (AKKKGKKKKK). Residues 483–653 (TRPPVVTIMG…LTEAEMRELR (171 aa)) form the tr-type G domain. Residues 492–499 (GHVDHGKT) form a G1 region. Residue 492–499 (GHVDHGKT) participates in GTP binding. Residues 517–521 (GITQH) form a G2 region. Positions 539–542 (DTPG) are G3. GTP-binding positions include 539–543 (DTPGH) and 593–596 (NKID). The tract at residues 593-596 (NKID) is G4. The segment at 629–631 (SAK) is G5.

This sequence belongs to the TRAFAC class translation factor GTPase superfamily. Classic translation factor GTPase family. IF-2 subfamily.

It is found in the cytoplasm. Functionally, one of the essential components for the initiation of protein synthesis. Protects formylmethionyl-tRNA from spontaneous hydrolysis and promotes its binding to the 30S ribosomal subunits. Also involved in the hydrolysis of GTP during the formation of the 70S ribosomal complex. This is Translation initiation factor IF-2 from Pelodictyon phaeoclathratiforme (strain DSM 5477 / BU-1).